The chain runs to 397 residues: Izumo sperm-egg fusion protein 1 (397 aa).

The signal sequence occupies residues 1 to 21 (MGPHFTLLLAALANCLCPGRP). 5 cysteine pairs are disulfide-bonded: Cys-22/Cys-149, Cys-25/Cys-152, Cys-135/Cys-159, Cys-139/Cys-165, and Cys-182/Cys-233. Over 22-319 (CIKCDQFVTD…QNPEKKMKTR (298 aa)) the chain is Extracellular. The important for interaction with IZUMO1R stretch occupies residues 148-160 (WCLKCEKQLHICR). Residues 167 to 251 (ERHIEVHRSE…HATVIRYDVT (85 aa)) enclose the Ig-like C2-type domain. N-linked (GlcNAc...) asparagine glycosylation is present at Asn-204. Positions 271–292 (EHETPVHVTPQTPPGQEPESEL) are disordered. The chain crosses the membrane as a helical span at residues 320 to 340 (LLILLTLGFVVLVASIIISVL). Residues 341-397 (HFRKVSAKLKNASDEVKPTASGSKSDQSLSQQMGLKKASQADFNSDYSGDKSEATEN) lie on the Cytoplasmic side of the membrane. The tract at residues 351 to 397 (NASDEVKPTASGSKSDQSLSQQMGLKKASQADFNSDYSGDKSEATEN) is disordered. Polar residues predominate over residues 360-373 (ASGSKSDQSLSQQM). Position 379 is a phosphoserine (Ser-379). Over residues 388 to 397 (SGDKSEATEN) the composition is skewed to basic and acidic residues.

It belongs to the Izumo family. As to quaternary structure, monomer, homodimer; disulfide-linked and homooligomer; depending on the context. Interacts with IZUMO1R/JUNO. IZUMO1 and IZUMO1R/JUNO form a complex with 1:1 stoichiometry. In gamete recognition, IZUMO1R/JUNO first binds to monomeric IZUMO1. The weak, but specific interaction with IZUMO1R/JUNO induces IZUMO1 homodimerization. The process follows a tight binding phase where IZUMO1 bends the entire structure towards the sperm membrane side through a thiol-disulfide exchange reaction. The molecule no longer binds to IZUMO1R/JUNO and instead binds to a putative second oocyte receptor. Interacts with ACE3. Part of a oolemmal binding multimeric complex (IZUMO1 complex) composed at least of IZUMO1 and GLIPR1L1; the complex assemblage is influenced by the maturation status of the male germ cell. Interacts with GLIPR1L1. Interacts with FREY; the interaction retains IZUMO1 at the endoplasmic reticulum membrane and coordinates IZUMO1 complex assembly. Interacts with WDR54. Forms a complex with SPACA6 and TMEM81 on spermatocyte cell membrane. N-glycosylated. Glycosylation is not essential for fusion and for proper protein trafficking in sperm. Post-translationally, phosphorylated. The cytoplasmic C-terminus is phosphorylated and undergoes phosphorylation changes during epididymal transit. As to expression, sperm-specific (at protein level). Detectable on sperm surface only after the acrosome reaction. Expressed in spermatozoa, more abundantly expressed in the head than the tail (at protein level).

The protein resides in the cell membrane. It is found in the cytoplasmic vesicle. The protein localises to the secretory vesicle. Its subcellular location is the acrosome membrane. Essential sperm cell-surface protein required for fertilization by acting as a ligand for IZUMO1R/JUNO receptor on egg. The IZUMO1:IZUMO1R/JUNO interaction is a necessary adhesion event between sperm and egg that is required for fertilization but is not sufficient for cell fusion. The ligand-receptor interaction probably does not act as a membrane 'fusogen'. Plays a critical role in sperm-oolemma binding prior to plasma membrane fusion. Can mediate cell-cell fusion in cultured mammalian cells independently of its binding to IZUMO1R/JUNO. The polypeptide is Izumo sperm-egg fusion protein 1 (Mus musculus (Mouse)).